Consider the following 62-residue polypeptide: Pro-MCH variant (62 aa).

The NGE-like stretch occupies residues 23–41 (GSVAFPAENGVQDTESTQE). Residues 28-62 (PAENGVQDTESTQEKRETGDEENSAQFPIGRRDFD) are disordered. An NEI-like region spans residues 44 to 56 (ETGDEENSAQFPI). The melanin-concentrating hormone-like stretch occupies residues 60 to 62 (DFD).

It belongs to the melanin-concentrating hormone family.

The polypeptide is Pro-MCH variant (PMCHL1) (Hylobates lar (Lar gibbon)).